Consider the following 259-residue polypeptide: NAD kinase (259 aa).

Catalysis depends on aspartate 49, which acts as the Proton acceptor. Residues 49-50, arginine 54, 118-119, aspartate 148, alanine 156, 159-164, and alanine 183 each bind NAD(+); these read DG, NE, and TAYNYS.

This sequence belongs to the NAD kinase family. The cofactor is a divalent metal cation.

It is found in the cytoplasm. It catalyses the reaction NAD(+) + ATP = ADP + NADP(+) + H(+). Functionally, involved in the regulation of the intracellular balance of NAD and NADP, and is a key enzyme in the biosynthesis of NADP. Catalyzes specifically the phosphorylation on 2'-hydroxyl of the adenosine moiety of NAD to yield NADP. In Xylella fastidiosa (strain Temecula1 / ATCC 700964), this protein is NAD kinase.